The chain runs to 195 residues: Transcription repressor OFP17 (195 aa).

The OVATE domain maps to glutamate 130–aspartate 190.

It is found in the nucleus. In terms of biological role, transcriptional repressor that may regulate multiple aspects of plant growth and development through the regulation of BEL1-LIKE (BLH) and KNOX TALE (KNAT) homeodomain transcription factors. This Arabidopsis thaliana (Mouse-ear cress) protein is Transcription repressor OFP17 (OFP17).